Here is a 396-residue protein sequence, read N- to C-terminus: Activity-regulated cytoskeleton-associated protein (396 aa).

Residues 54 to 78 (SKQVERELKGLHRSVGKLENNLDGY) adopt a coiled-coil conformation. An interaction with SH3GL1 or SH3GL3 region spans residues 89–100 (KSIKACLCRCQE). The segment at 195 to 214 (QSWVPGEDGQPSPGVDTQIF) is interaction with DNM2. Position 260 is a phosphoserine (S260). Glycyl lysine isopeptide (Lys-Gly) (interchain with G-Cter in ubiquitin) cross-links involve residues K268 and K269. T278 carries the phosphothreonine modification. Residues 358-396 (GLEQAAEPSVTPLPTEDETEALTPALTSESVASDRTQPE) are disordered. Positions 382–396 (ALTSESVASDRTQPE) are enriched in polar residues.

It belongs to the ARC/ARG3.1 family. As to quaternary structure, homooligomer; homooligomerizes into virion-like capsids. Interacts with SH3GL1/endophilin-2, SH3GL3/endophilin-3 and DNM2/DYN2. Interacts with CAMK2B (in the kinase inactive state); leading to target ARC to inactive synapses. Interacts with PSEN1. Interacts with GRIN2A and GRIN2B; inhibiting homooligomerization. Post-translationally, palmitoylation anchors the protein into the membrane by allowing direct insertion into the hydrophobic core of the lipid bilayer. In terms of processing, ubiquitinated by UBE3A, leading to its degradation by the proteasome, thereby promoting AMPA receptors (AMPARs) expression at synapses. Ubiquitinated by RNF216 at Lys-268 and Lys-269 limiting ARC protein levels induced by synaptic activity and thus regulating ARC-dependent forms of synaptic plasticity. Phosphorylation at Ser-260 by CaMK2 prevents homooligomerization into virion-like capsids by disrupting an interaction surface essential for high-order oligomerization. Phosphorylation by CaMK2 inhibits synaptic activity. As to expression, expressed exclusively in certain parts of the brain including cortex and molecular layer of the hippocampus. Typically expressed at high level in a minority of neurons. Basal expression higher in cortex than in hippocampus, highest in visual cortex.

The protein localises to the extracellular vesicle membrane. The protein resides in the postsynaptic cell membrane. It localises to the synapse. It is found in the postsynaptic density. Its subcellular location is the early endosome membrane. The protein localises to the cell projection. The protein resides in the dendrite. It localises to the cytoplasm. It is found in the cytoskeleton. Its subcellular location is the cell cortex. The protein localises to the dendritic spine. The protein resides in the cytoplasmic vesicle. It localises to the secretory vesicle. It is found in the acrosome. Its subcellular location is the clathrin-coated vesicle membrane. Functionally, master regulator of synaptic plasticity that self-assembles into virion-like capsids that encapsulate RNAs and mediate intercellular RNA transfer in the nervous system. ARC protein is released from neurons in extracellular vesicles that mediate the transfer of ARC mRNA into new target cells, where ARC mRNA can undergo activity-dependent translation. ARC capsids are endocytosed and are able to transfer ARC mRNA into the cytoplasm of neurons. Acts as a key regulator of synaptic plasticity: required for protein synthesis-dependent forms of long-term potentiation (LTP) and depression (LTD) and for the formation of long-term memory. Regulates synaptic plasticity by promoting endocytosis of AMPA receptors (AMPARs) in response to synaptic activity: this endocytic pathway maintains levels of surface AMPARs in response to chronic changes in neuronal activity through synaptic scaling, thereby contributing to neuronal homeostasis. Acts as a postsynaptic mediator of activity-dependent synapse elimination in the developing cerebellum by mediating elimination of surplus climbing fiber synapses. Accumulates at weaker synapses, probably to prevent their undesired enhancement. This suggests that ARC-containing virion-like capsids may be required to eliminate synaptic material. Required to transduce experience into long-lasting changes in visual cortex plasticity and for long-term memory. Involved in postsynaptic trafficking and processing of amyloid-beta A4 (APP) via interaction with PSEN1. In addition to its role in synapses, also involved in the regulation of the immune system: specifically expressed in skin-migratory dendritic cells and regulates fast dendritic cell migration, thereby regulating T-cell activation. The chain is Activity-regulated cytoskeleton-associated protein from Rattus norvegicus (Rat).